A 262-amino-acid polypeptide reads, in one-letter code: Cerebellar degeneration-related antigen 1 (262 aa).

Tandem repeats lie at residues 3-8 (WLEDVD), 9-14 (FLEDVP), 15-20 (LLEDIP), 21-26 (LLEDVP), 27-32 (LLEDVP), 33-38 (LLEDTS), 39-44 (RLEDIN), 45-50 (LMEDMA), 51-56 (LLEDVD), 57-62 (LLEDTD), 63-68 (FLEDLD), 69-74 (FSEAMD), 75-80 (LREDKD), 81-86 (FLEDMD), 87-92 (SLEDMA), 93-98 (LLEDVD), 99-104 (LLEDTD), 105-110 (FLEDPD), 111-116 (FLEAID), 117-122 (LREDKD), 123-128 (FLEDMD), 129-134 (SLEDLE), 135-140 (AIGRCG), 141-146 (FSGRHG), 147-152 (FFGRRR), 153-158 (FSGRPK), 159-164 (LSGRLG), 165-170 (LLGRRG), 171-176 (FSGRLG), 177-182 (GYWKTW), 183-188 (IFWKTW), 189-194 (IFWKTW), 195-200 (IFRKTY), and 201-206 (IGWKTW). The tract at residues 3–140 (WLEDVDFLED…EDLEAIGRCG (138 aa)) is 23 X 6 AA approximate repeats. The 6 X 6 AA approximate repeats stretch occupies residues 141–176 (FSGRHGFFGRRRFSGRPKLSGRLGLLGRRGFSGRLG). Residues 177 to 206 (GYWKTWIFWKTWIFWKTWIFRKTYIGWKTW) are 5 X 6 AA approximate repeats.

In terms of tissue distribution, brain; predominantly expressed in normal neuroectodermal tissues and in certain malignant tumors.

This Homo sapiens (Human) protein is Cerebellar degeneration-related antigen 1 (CDR1).